Reading from the N-terminus, the 373-residue chain is Opsin Rh1 (373 aa).

Residues 1–49 (MESFAVAAAQLGPHFAPLSNGSVVDKVTPDMAHLISPYWNQFPAMDPIW) lie on the Extracellular side of the membrane. The N-linked (GlcNAc...) asparagine glycan is linked to Asn20. Residues 50–74 (AKILTAYMIMIGMISWCGNGVVIYI) traverse the membrane as a helical segment. The Cytoplasmic portion of the chain corresponds to 75–86 (FATTKSLRTPAN). Residues 87–112 (LLVINLAISDFGIMITNTPMMGINLY) form a helical membrane-spanning segment. Residues 113–126 (FETWVLGPMMCDIY) lie on the Extracellular side of the membrane. Cys123 and Cys200 are joined by a disulfide. Residues 127 to 146 (AGLGSAFGCSSIWSMCMISL) traverse the membrane as a helical segment. The Cytoplasmic portion of the chain corresponds to 147-165 (DRYQVIVKGMAGRPMTIPL). Residues 166 to 189 (ALGKIAYIWFMSSIWCLAPAFGWS) traverse the membrane as a helical segment. Topologically, residues 190–213 (RYVPEGNLTSCGIDYLERDWNPRS) are extracellular. Asn196 carries an N-linked (GlcNAc...) asparagine glycan. The helical transmembrane segment at 214–241 (YLIFYSIFVYYIPLFLICYSYWFIIAAV) threads the bilayer. The Cytoplasmic portion of the chain corresponds to 242 to 276 (SAHEKAMREQAKKMNVKSLRSSEDAEKSAEGKLAK). The helical transmembrane segment at 277–300 (VALVTITLWFMAWTPYLVINCMGL) threads the bilayer. Residues 301–307 (FKFEGLT) lie on the Extracellular side of the membrane. A helical transmembrane segment spans residues 308-332 (PLNTIWGACFAKSAACYNPIVYGIS). N6-(retinylidene)lysine is present on Lys319. Over 333–373 (HPKYRLALKEKCPCCVFGKVDDGKSSDAQSQATASEAESKA) the chain is Cytoplasmic. A disordered region spans residues 354–373 (DGKSSDAQSQATASEAESKA). Residues 358 to 373 (SDAQSQATASEAESKA) are compositionally biased toward low complexity.

This sequence belongs to the G-protein coupled receptor 1 family. Opsin subfamily. Post-translationally, phosphorylated on some or all of the serine and threonine residues present in the C-terminal region.

The protein resides in the cell projection. It localises to the rhabdomere membrane. Functionally, visual pigments are the light-absorbing molecules that mediate vision. They consist of an apoprotein, opsin, covalently linked to cis-retinal. In Drosophila melanogaster (Fruit fly), this protein is Opsin Rh1 (ninaE).